A 270-amino-acid chain; its full sequence is Acyl-[acyl-carrier-protein]--UDP-N-acetylglucosamine O-acyltransferase (270 aa).

It belongs to the transferase hexapeptide repeat family. LpxA subfamily. Homotrimer.

The protein localises to the cytoplasm. The catalysed reaction is a (3R)-hydroxyacyl-[ACP] + UDP-N-acetyl-alpha-D-glucosamine = a UDP-3-O-[(3R)-3-hydroxyacyl]-N-acetyl-alpha-D-glucosamine + holo-[ACP]. It participates in glycolipid biosynthesis; lipid IV(A) biosynthesis; lipid IV(A) from (3R)-3-hydroxytetradecanoyl-[acyl-carrier-protein] and UDP-N-acetyl-alpha-D-glucosamine: step 1/6. Functionally, involved in the biosynthesis of lipid A, a phosphorylated glycolipid that anchors the lipopolysaccharide to the outer membrane of the cell. This chain is Acyl-[acyl-carrier-protein]--UDP-N-acetylglucosamine O-acyltransferase, found in Helicobacter pylori (strain Shi470).